A 242-amino-acid chain; its full sequence is Exosome complex component ski6 (242 aa).

Belongs to the RNase PH family. As to quaternary structure, component of the RNA exosome complex. Specifically part of the catalytically inactive RNA exosome core complex (Exo-9) which may associate with the catalytic subunits rrp6 and dis3 in cytoplasmic- and nuclear-specific RNA exosome complex forms. Exo-9 is formed by a hexameric base ring of RNase PH domain-containing subunits and a cap ring consisting of csl4, rrp4 and rrp40.

Its subcellular location is the cytoplasm. The protein resides in the nucleus. It localises to the nucleolus. Functionally, non-catalytic component of the RNA exosome complex which has 3'-&gt;5' exoribonuclease activity and participates in a multitude of cellular RNA processing and degradation events. In the nucleus, the RNA exosome complex is involved in proper maturation of stable RNA species such as rRNA, snRNA and snoRNA, in the elimination of RNA processing by-products and non-coding 'pervasive' transcripts, such as antisense RNA species and cryptic unstable transcripts (CUTs), and of mRNAs with processing defects, thereby limiting or excluding their export to the cytoplasm. In the cytoplasm, the RNA exosome complex is involved in general mRNA turnover and in RNA surveillance pathways, preventing translation of aberrant mRNAs. The catalytic inactive RNA exosome core complex of 9 subunits (Exo-9) is proposed to play a pivotal role in the binding and presentation of RNA for ribonucleolysis, and to serve as a scaffold for the association with catalytic subunits and accessory proteins or complexes. ski6 is part of the hexameric ring of RNase PH domain-containing subunits proposed to form a central channel which threads RNA substrates for degradation. In Schizosaccharomyces pombe (strain 972 / ATCC 24843) (Fission yeast), this protein is Exosome complex component ski6 (ski6).